The following is a 771-amino-acid chain: Transcription factor TAS2 (771 aa).

A disordered region spans residues 33–53 (RSRAESASGPQQPSRRQPQTS). Positions 42–51 (PQQPSRRQPQ) are enriched in low complexity. The zn(2)-C6 fungal-type DNA-binding region spans 54-80 (CDLCRSRKIKCDRGTPCGNCRTRGLAC). The segment at 125–150 (AVGGSGNAENGAHGDATPRVPLSGLE) is disordered.

It localises to the nucleus. Transcription factor; part of the gene cluster that mediates the biosynthesis of the toxin tenuazonic acid (TeA), an inhibitor of protein biosynthesis on ribosomes by suppressing the release of new protein. Directly regulates the expression of the hybrid PKS-NRPS synthetase TAS1 and the subsequent production of TeA. The chain is Transcription factor TAS2 from Pyricularia oryzae (strain 70-15 / ATCC MYA-4617 / FGSC 8958) (Rice blast fungus).